Reading from the N-terminus, the 272-residue chain is Cholesterol 25-hydroxylase (272 aa).

N-linked (GlcNAc...) asparagine glycosylation occurs at N5. 3 helical membrane passes run 38 to 58 (FFPV…FVVL), 84 to 104 (LLPC…PVTL), and 121 to 141 (LLLL…EFFV). In terms of domain architecture, Fatty acid hydroxylase spans 129-263 (LFCLLLFDME…FTHWDKILGT (135 aa)). The short motif at 142-146 (WHLLH) is the Histidine box-1 element. Positions 157–161 (HKVHH) match the Histidine box-2 motif. Residues N163 and N189 are each glycosylated (N-linked (GlcNAc...) asparagine). The short motif at 238–244 (HHDLHHS) is the Histidine box-3 element.

The protein belongs to the sterol desaturase family. The cofactor is Fe cation. N-glycosylated.

It is found in the endoplasmic reticulum membrane. It catalyses the reaction cholesterol + AH2 + O2 = 25-hydroxycholesterol + A + H2O. The catalysed reaction is cholesterol + NADPH + O2 + H(+) = 25-hydroxycholesterol + NADP(+) + H2O. Catalyzes the formation of 25-hydroxycholesterol from cholesterol, leading to repress cholesterol biosynthetic enzymes. Plays a key role in cell positioning and movement in lymphoid tissues: 25-hydroxycholesterol is an intermediate in biosynthesis of 7-alpha,25-dihydroxycholesterol (7-alpha,25-OHC), an oxysterol that acts as a ligand for the G protein-coupled receptor GPR183/EBI2, a chemotactic receptor for a number of lymphoid cells. May play an important role in regulating lipid metabolism by synthesizing a corepressor that blocks sterol regulatory element binding protein (SREBP) processing. As an interferon-stimulated gene, has broad antiviral activities against a wide range of enveloped viruses, such as vesicular stomatitis virus (VSV) and SARS coronavirus-2 (SARS-CoV-2). Its product, 25-hydroxycholesterol, activates the ER-localized enzyme ACAT to induce internalization of accessible cholesterol on the plasma membrane and restricts SARS-CoV-2 S protein-mediated fusion which inhibits virus replication. In testis, production of 25-hydroxycholesterol by macrophages plays a role in Leydig cell differentiation. Required to restrain inflammation in macrophages: production of 25-hydroxycholesterol protects macrophages from cholesterol overload, thereby preventing mitochondrial DNA release and subsequent activation of the AIM2 inflammasome. This Homo sapiens (Human) protein is Cholesterol 25-hydroxylase.